A 292-amino-acid chain; its full sequence is Probable endonuclease 4 (292 aa).

Residues histidine 69, histidine 109, glutamate 145, aspartate 179, histidine 182, histidine 216, aspartate 229, histidine 231, and glutamate 261 each contribute to the Zn(2+) site.

It belongs to the AP endonuclease 2 family. Zn(2+) is required as a cofactor.

The catalysed reaction is Endonucleolytic cleavage to 5'-phosphooligonucleotide end-products.. Its function is as follows. Endonuclease IV plays a role in DNA repair. It cleaves phosphodiester bonds at apurinic or apyrimidinic (AP) sites, generating a 3'-hydroxyl group and a 5'-terminal sugar phosphate. The polypeptide is Probable endonuclease 4 (Desulfotalea psychrophila (strain LSv54 / DSM 12343)).